We begin with the raw amino-acid sequence, 82 residues long: Apovitellenin-1 (82 aa).

This sequence belongs to the apovitellenin family. Monomer. Found in egg yolk and in plasma.

Its function is as follows. Protein component of the very low density lipoprotein (VLDL) of egg-laying females. Potent lipoprotein lipase inhibitor, preventing the loss of triglycerides from VLDL on their way from the liver to the growing oocytes. In Anas platyrhynchos (Mallard), this protein is Apovitellenin-1.